Here is a 311-residue protein sequence, read N- to C-terminus: MEIKLANPRGFCAGVDRAIDIVNRALDVFGAPIYVRHEVVHNKFVVERLKERGAIFVDELEAVPDDVIVIFSAHGVSQAVRQEADRRGLKVFDATCPLVTKVHMEVAKYSNDGCECVLIGHEGHPEVEGTMGQYDTANGGAIYLVEDESDVEQLEVRDPTRLSYVTQTTLSMDDTARVIDSLRAKFPHITGPRKDDICYATQNRQDAVKQLALECDLVLVVGSPNSSNSNRLRELAERCGTAAYLIDGPEDLDKSWFANCKNIGITAGASAPEVLVRDVIEGLKAIGASAPVELQGQEENISFSLPKELRV.

[4Fe-4S] cluster is bound at residue Cys12. (2E)-4-hydroxy-3-methylbut-2-enyl diphosphate contacts are provided by His41 and His74. Dimethylallyl diphosphate contacts are provided by His41 and His74. Isopentenyl diphosphate contacts are provided by His41 and His74. Cys96 serves as a coordination point for [4Fe-4S] cluster. Residue His124 participates in (2E)-4-hydroxy-3-methylbut-2-enyl diphosphate binding. His124 contributes to the dimethylallyl diphosphate binding site. His124 is a binding site for isopentenyl diphosphate. Glu126 functions as the Proton donor in the catalytic mechanism. Residue Thr168 coordinates (2E)-4-hydroxy-3-methylbut-2-enyl diphosphate. Residue Cys198 coordinates [4Fe-4S] cluster. (2E)-4-hydroxy-3-methylbut-2-enyl diphosphate is bound by residues Ser226, Ser227, Asn228, and Ser270. Residues Ser226, Ser227, Asn228, and Ser270 each coordinate dimethylallyl diphosphate. 4 residues coordinate isopentenyl diphosphate: Ser226, Ser227, Asn228, and Ser270.

This sequence belongs to the IspH family. [4Fe-4S] cluster is required as a cofactor.

The enzyme catalyses isopentenyl diphosphate + 2 oxidized [2Fe-2S]-[ferredoxin] + H2O = (2E)-4-hydroxy-3-methylbut-2-enyl diphosphate + 2 reduced [2Fe-2S]-[ferredoxin] + 2 H(+). It carries out the reaction dimethylallyl diphosphate + 2 oxidized [2Fe-2S]-[ferredoxin] + H2O = (2E)-4-hydroxy-3-methylbut-2-enyl diphosphate + 2 reduced [2Fe-2S]-[ferredoxin] + 2 H(+). Its pathway is isoprenoid biosynthesis; dimethylallyl diphosphate biosynthesis; dimethylallyl diphosphate from (2E)-4-hydroxy-3-methylbutenyl diphosphate: step 1/1. It functions in the pathway isoprenoid biosynthesis; isopentenyl diphosphate biosynthesis via DXP pathway; isopentenyl diphosphate from 1-deoxy-D-xylulose 5-phosphate: step 6/6. Catalyzes the conversion of 1-hydroxy-2-methyl-2-(E)-butenyl 4-diphosphate (HMBPP) into a mixture of isopentenyl diphosphate (IPP) and dimethylallyl diphosphate (DMAPP). Acts in the terminal step of the DOXP/MEP pathway for isoprenoid precursor biosynthesis. The sequence is that of 4-hydroxy-3-methylbut-2-enyl diphosphate reductase from Saccharophagus degradans (strain 2-40 / ATCC 43961 / DSM 17024).